The chain runs to 375 residues: Alpha-2,8-sialyltransferase 8B (375 aa).

The Cytoplasmic segment spans residues 1–6 (MQLQFR). A helical; Signal-anchor for type II membrane protein membrane pass occupies residues 7 to 23 (SWMLAALTLLVVFLIFA). Residues 24–375 (DISEIEEEIG…LTVGQCDGAT (352 aa)) are Lumenal-facing. 4 N-linked (GlcNAc...) asparagine glycosylation sites follow: Asn-60, Asn-72, Asn-89, and Asn-134. Cystine bridges form between Cys-157–Cys-307 and Cys-171–Cys-371. Positions 162 and 185 each coordinate CMP-N-acetyl-beta-neuraminate. 2 N-linked (GlcNAc...) asparagine glycosylation sites follow: Asn-219 and Asn-234. CMP-N-acetyl-beta-neuraminate-binding residues include Thr-294, Thr-295, Gly-296, Trp-316, Tyr-329, and His-330. Catalysis depends on His-346, which acts as the Proton donor/acceptor.

Belongs to the glycosyltransferase 29 family. Autopolysialylated. Autopolysialylation is not a prerequisite for the polysialylation acitity, but enhances the polysialylation acitity.

Its subcellular location is the golgi apparatus membrane. It localises to the secreted. The protein localises to the cell membrane. The catalysed reaction is [N-acetyl-alpha-D-neuraminosyl-(2-&gt;8)](n) + CMP-N-acetyl-beta-neuraminate = [N-acetyl-alpha-D-neuraminosyl-(2-&gt;8)](n+1) + CMP + H(+). Its pathway is protein modification; protein glycosylation. Its function is as follows. Catalyzes the transfer of a sialic acid from a CMP-linked sialic acid donor onto a terminal alpha-2,3-, alpha-2,6-, or alpha-2,8-linked sialic acid of an N-linked glycan acceptor through alpha-2,8-linkages. Therefore, participates in polysialic acid synthesis on various sialylated N-acetyllactosaminyl oligosaccharides (alpha-2,3-, alpha-2,6-, or alpha-2,8-linked sialic acid), including NCAM1, NCAM1 N-glycans, FETUB N-glycans, and to a lesser extent sialylparagloboside (SPG) and AHSG, which does not require the initial addition of an alpha 2,8-sialic acid. However, does not exhibit sialic acid-polymerase activity. Catalyzes polysialic acid synthesis in the hippocampal on NCAM1 and supports neurite outgrowth. ST8SIA2-mediated polysialylation influences on oligodendrocyte differentiation and may promote the integrity of myelin and axons. This Pan troglodytes (Chimpanzee) protein is Alpha-2,8-sialyltransferase 8B.